A 312-amino-acid polypeptide reads, in one-letter code: Homoserine O-acetyltransferase (312 aa).

Residue cysteine 142 is the Acyl-thioester intermediate of the active site. Substrate is bound by residues lysine 163 and serine 192. The active-site Proton acceptor is histidine 235. Glutamate 237 is a catalytic residue. A substrate-binding site is contributed by arginine 249.

Belongs to the MetA family.

The protein resides in the cytoplasm. The enzyme catalyses L-homoserine + acetyl-CoA = O-acetyl-L-homoserine + CoA. Its pathway is amino-acid biosynthesis; L-methionine biosynthesis via de novo pathway; O-acetyl-L-homoserine from L-homoserine: step 1/1. In terms of biological role, transfers an acetyl group from acetyl-CoA to L-homoserine, forming acetyl-L-homoserine. The protein is Homoserine O-acetyltransferase of Chelativorans sp. (strain BNC1).